We begin with the raw amino-acid sequence, 383 residues long: Transposase InsI for insertion sequence element IS30C (383 aa).

The Integrase catalytic domain maps to 213-379; sequence VNGTPIHERS…TPKEIIERGV (167 aa).

It belongs to the transposase IS30 family.

Its function is as follows. Required for the transposition of the insertion element. This Escherichia coli (strain K12) protein is Transposase InsI for insertion sequence element IS30C (insI3).